The primary structure comprises 474 residues: Phenylalanine--tRNA ligase alpha subunit (474 aa).

Residues Thr317, 356 to 358, and Tyr396 each bind L-phenylalanine; that span reads QLE. Position 398 (Glu398) interacts with Mg(2+). Residue Phe421 participates in L-phenylalanine binding.

The protein belongs to the class-II aminoacyl-tRNA synthetase family. Phe-tRNA synthetase alpha subunit type 2 subfamily. As to quaternary structure, tetramer of two alpha and two beta subunits. The cofactor is Mg(2+).

The protein resides in the cytoplasm. The enzyme catalyses tRNA(Phe) + L-phenylalanine + ATP = L-phenylalanyl-tRNA(Phe) + AMP + diphosphate + H(+). This chain is Phenylalanine--tRNA ligase alpha subunit, found in Methanocorpusculum labreanum (strain ATCC 43576 / DSM 4855 / Z).